The sequence spans 327 residues: Lipoyl synthase (327 aa).

The [4Fe-4S] cluster site is built by C75, C80, C86, C101, C105, C108, and S315. One can recognise a Radical SAM core domain in the interval 87–304; that stretch reads FGNGTATFMI…EEEAYKMGFS (218 aa).

This sequence belongs to the radical SAM superfamily. Lipoyl synthase family. Requires [4Fe-4S] cluster as cofactor.

It localises to the cytoplasm. It catalyses the reaction [[Fe-S] cluster scaffold protein carrying a second [4Fe-4S](2+) cluster] + N(6)-octanoyl-L-lysyl-[protein] + 2 oxidized [2Fe-2S]-[ferredoxin] + 2 S-adenosyl-L-methionine + 4 H(+) = [[Fe-S] cluster scaffold protein] + N(6)-[(R)-dihydrolipoyl]-L-lysyl-[protein] + 4 Fe(3+) + 2 hydrogen sulfide + 2 5'-deoxyadenosine + 2 L-methionine + 2 reduced [2Fe-2S]-[ferredoxin]. Its pathway is protein modification; protein lipoylation via endogenous pathway; protein N(6)-(lipoyl)lysine from octanoyl-[acyl-carrier-protein]: step 2/2. Catalyzes the radical-mediated insertion of two sulfur atoms into the C-6 and C-8 positions of the octanoyl moiety bound to the lipoyl domains of lipoate-dependent enzymes, thereby converting the octanoylated domains into lipoylated derivatives. This Variovorax paradoxus (strain S110) protein is Lipoyl synthase.